Here is an 83-residue protein sequence, read N- to C-terminus: uncharacterized protein (83 aa).

The interval 40-65 (RMQAGASPDEDNDVNGETSFSRSFGG) is disordered. A compositionally biased stretch (polar residues) spans 54–65 (NGETSFSRSFGG).

This is an uncharacterized protein from Dictyostelium discoideum (Social amoeba).